A 421-amino-acid polypeptide reads, in one-letter code: U-box domain-containing protein 25 (421 aa).

Residues 13 to 88 enclose the U-box domain; that stretch reads QIPYHFRCPI…QEWCVANRSN (76 aa).

The catalysed reaction is S-ubiquitinyl-[E2 ubiquitin-conjugating enzyme]-L-cysteine + [acceptor protein]-L-lysine = [E2 ubiquitin-conjugating enzyme]-L-cysteine + N(6)-ubiquitinyl-[acceptor protein]-L-lysine.. It participates in protein modification; protein ubiquitination. Its function is as follows. Functions as an E3 ubiquitin ligase. This is U-box domain-containing protein 25 (PUB25) from Arabidopsis thaliana (Mouse-ear cress).